We begin with the raw amino-acid sequence, 196 residues long: Peptidyl-tRNA hydrolase (196 aa).

A tRNA-binding site is contributed by tyrosine 14. The active-site Proton acceptor is the histidine 19. Positions 64, 66, and 112 each coordinate tRNA.

It belongs to the PTH family. As to quaternary structure, monomer.

The protein resides in the cytoplasm. The enzyme catalyses an N-acyl-L-alpha-aminoacyl-tRNA + H2O = an N-acyl-L-amino acid + a tRNA + H(+). Its function is as follows. Hydrolyzes ribosome-free peptidyl-tRNAs (with 1 or more amino acids incorporated), which drop off the ribosome during protein synthesis, or as a result of ribosome stalling. In terms of biological role, catalyzes the release of premature peptidyl moieties from peptidyl-tRNA molecules trapped in stalled 50S ribosomal subunits, and thus maintains levels of free tRNAs and 50S ribosomes. This Solibacter usitatus (strain Ellin6076) protein is Peptidyl-tRNA hydrolase.